The primary structure comprises 134 residues: uncharacterized protein (134 aa).

The signal sequence occupies residues 1 to 16; sequence MAKAVALLLAAIAASA.

This is an uncharacterized protein from Oryza sativa subsp. indica (Rice).